Consider the following 118-residue polypeptide: Autophagy-related protein 8 (118 aa).

Residue Gly116 is the site of Phosphatidylethanolamine amidated glycine attachment. The propeptide at Glu117–Ala118 is removed in mature form.

It belongs to the ATG8 family. As to quaternary structure, conjugation to phosphatidylethanolamine (PE) leads to homodimerization. Interacts with ATG1, ATG3, ATG4, ATG7 and ATG12. Post-translationally, the C-terminal Glu-117 and Ala-118 residues of ATG8 are removed by ATG4 to expose Gly-116 at the C-terminus. This Gly-116 forms then a thioester bond with the 'Cys-550' of ATG7 (E1-like activating enzyme) before being transferred to the 'Cys-244' of ATG3 (the specific E2 conjugating enzyme), in order to be finally amidated with phosphatidylethanolamine. This lipid modification anchors ATG8 to membranes and can be reversed by ATG4, releasing soluble ATG8.

It is found in the cytoplasmic vesicle. The protein resides in the cvt vesicle membrane. The protein localises to the autophagosome membrane. Its subcellular location is the vacuole membrane. In terms of biological role, ubiquitin-like modifier involved in cytoplasm to vacuole transport (Cvt) vesicles and autophagosome formation. With ATG4, mediates the delivery of the vesicles and autophagosomes to the vacuole via the microtubule cytoskeleton. Required for selective autophagic degradation of the nucleus (nucleophagy) as well as for mitophagy which contributes to regulate mitochondrial quantity and quality by eliminating the mitochondria to a basal level to fulfill cellular energy requirements and preventing excess ROS production. Also participates in membrane fusion events that take place in the early secretory pathway. Also involved in endoplasmic reticulum-specific autophagic process and is essential for the survival of cells subjected to severe ER stress. The ATG8-PE conjugate mediates tethering between adjacent membranes and stimulates membrane hemifusion, leading to expansion of the autophagosomal membrane during autophagy. Moreover not only conjugation, but also subsequent ATG8-PE deconjugation is an important step required to facilitate multiple events during macroautophagy, and especially for efficient autophagosome biogenesis, the assembly of ATG9-containing tubulovesicular clusters into phagophores/autophagosomes, and for the disassembly of PAS-associated ATG components. Autophagy is required for proper vegetative growth, asexual/sexual reproduction, and full virulence. Autophagy is particularly involved in the biosynthesis of deoxynivalenol (DON), an important virulence determinant. The chain is Autophagy-related protein 8 from Gibberella zeae (strain ATCC MYA-4620 / CBS 123657 / FGSC 9075 / NRRL 31084 / PH-1) (Wheat head blight fungus).